The following is a 132-amino-acid chain: Agouti-signaling protein (132 aa).

The first 22 residues, 1-22 (MDVTRLLLATLLVFLCFFTAYS), serve as a signal peptide directing secretion. Asn39 is a glycosylation site (N-linked (GlcNAc...) asparagine). Basic and acidic residues predominate over residues 61-79 (EISRKEAEKKRSSKKEASM). The tract at residues 61–87 (EISRKEAEKKRSSKKEASMKKVARPRT) is disordered. 5 cysteine pairs are disulfide-bonded: Cys93–Cys108, Cys100–Cys114, Cys107–Cys125, Cys111–Cys132, and Cys116–Cys123. One can recognise an Agouti domain in the interval 93-132 (CVATRDSCKPPAPACCDPCASCQCRFFRSACSCRVLSLNC).

It is found in the secreted. In terms of biological role, involved in the regulation of melanogenesis. The binding of ASP to MC1R precludes alpha-MSH initiated signaling and thus blocks production of cAMP, leading to a down-regulation of eumelanogenesis (brown/black pigment) and thus increasing synthesis of pheomelanin (yellow/red pigment). The protein is Agouti-signaling protein (ASIP) of Macaca fascicularis (Crab-eating macaque).